The sequence spans 352 residues: 3'(2'),5'-bisphosphate nucleotidase (352 aa).

The active-site Proton acceptor is Asp45. Residues Glu68, Asp133, Ile135, and Asp136 each contribute to the Mg(2+) site. Thr138 serves as the catalytic Proton acceptor. Thr138, His240, Ser264, Lys267, Arg281, and Asp294 together coordinate adenosine 3',5'-bisphosphate. 5 residues coordinate AMP: His240, Ser264, Lys267, Arg281, and Asp294. Residue Asp294 participates in Mg(2+) binding.

It belongs to the inositol monophosphatase superfamily. Mg(2+) is required as a cofactor.

It catalyses the reaction 3'-phosphoadenylyl sulfate + H2O = adenosine 5'-phosphosulfate + phosphate. It carries out the reaction adenosine 3',5'-bisphosphate + H2O = AMP + phosphate. The enzyme catalyses adenosine 2',5'-bisphosphate + H2O = AMP + phosphate. In terms of biological role, phosphatase that converts adenosine 3'-phosphate 5'-phosphosulfate (PAPS) to adenosine 5'-phosphosulfate (APS) and 3'(2')-phosphoadenosine 5'-phosphate (PAP) to AMP. May regulate the flux of sulfur in the sulfur-activation pathway by converting PAPS to APS. Involved in osmoadaptation. The polypeptide is 3'(2'),5'-bisphosphate nucleotidase (Emericella nidulans (strain FGSC A4 / ATCC 38163 / CBS 112.46 / NRRL 194 / M139) (Aspergillus nidulans)).